Consider the following 500-residue polypeptide: Lysine--tRNA ligase (500 aa).

Mg(2+)-binding residues include Glu-410 and Glu-417.

It belongs to the class-II aminoacyl-tRNA synthetase family. As to quaternary structure, homodimer. The cofactor is Mg(2+).

Its subcellular location is the cytoplasm. The catalysed reaction is tRNA(Lys) + L-lysine + ATP = L-lysyl-tRNA(Lys) + AMP + diphosphate. This is Lysine--tRNA ligase from Shewanella denitrificans (strain OS217 / ATCC BAA-1090 / DSM 15013).